A 175-amino-acid polypeptide reads, in one-letter code: MGRTLESKQQIVEELKKLLGEAEMALVLDYQGLSIKEMSDLRTRLQASNGVCKVTKNTLMRRAIDGDSVWSSLDSLLNGTNAFVLIKGDVGGAVKAVQSFQKETKKSETKGGLFEGKLLSQDEIKAIGELPSKEVLMAQIAGAINAVTTKVAVGVNEVPSGLARALKQHADSGES.

The protein belongs to the universal ribosomal protein uL10 family. In terms of assembly, part of the ribosomal stalk of the 50S ribosomal subunit. The N-terminus interacts with L11 and the large rRNA to form the base of the stalk. The C-terminus forms an elongated spine to which L12 dimers bind in a sequential fashion forming a multimeric L10(L12)X complex.

Functionally, forms part of the ribosomal stalk, playing a central role in the interaction of the ribosome with GTP-bound translation factors. This Synechococcus sp. (strain CC9311) protein is Large ribosomal subunit protein uL10.